Consider the following 151-residue polypeptide: C-C motif chemokine 25 (151 aa).

Residues 1-23 form the signal peptide; sequence MRPWLLACLVACFVGAWAPAIHA. Disulfide bonds link C30–C58 and C31–C75. A disordered region spans residues 93–151; that stretch reads RNKKDSKPHHSGRRFFQGPQSGVRKLSSGTSRPLLLKFSGPTRSSKRKASLLTTAIPGP.

This sequence belongs to the intercrine beta (chemokine CC) family.

The protein localises to the secreted. Potentially involved in T-cell development. Recombinant protein shows chemotactic activity on thymocytes, macrophages, THP-1 cells, and dendritics cells but is inactive on peripheral blood lymphocytes and neutrophils. Binds to CCR9. Binds to atypical chemokine receptor ACKR4 and mediates the recruitment of beta-arrestin (ARRB1/2) to ACKR4. The sequence is that of C-C motif chemokine 25 (CCL25) from Sus scrofa (Pig).